We begin with the raw amino-acid sequence, 244 residues long: MGCRDVHAATVLSFLCGIASVAGLFAGTLLPNWRKLRLITFNRNEKNLTVYTGLWVKCARYDGGNDCLMYDAAWYSSVDQLDLRVLQFALPLSILIAMGALLLCLIGMCNTAFRSSVPNIKLAKCLVNSAGCHLVAGLLFFLAGTVSLSPSIWVIFYNIHLNRKFEPVFAFDYAVYVTVASAGGLFMTALLLFIWYCACKSLPSPFWQPLYSHPPGMHTYSQPYSARSRLSAIEIDIPVVSHTT.

Residues 1 to 10 (MGCRDVHAAT) are Cytoplasmic-facing. A helical membrane pass occupies residues 11–31 (VLSFLCGIASVAGLFAGTLLP). Residues 32 to 87 (NWRKLRLITFNRNEKNLTVYTGLWVKCARYDGGNDCLMYDAAWYSSVDQLDLRVLQ) lie on the Extracellular side of the membrane. The chain crosses the membrane as a helical span at residues 88–108 (FALPLSILIAMGALLLCLIGM). Residues 109–135 (CNTAFRSSVPNIKLAKCLVNSAGCHLV) are Cytoplasmic-facing. Residues 136-156 (AGLLFFLAGTVSLSPSIWVIF) traverse the membrane as a helical segment. Topologically, residues 157–174 (YNIHLNRKFEPVFAFDYA) are extracellular. Residues 175 to 195 (VYVTVASAGGLFMTALLLFIW) form a helical membrane-spanning segment. The Cytoplasmic segment spans residues 196-244 (YCACKSLPSPFWQPLYSHPPGMHTYSQPYSARSRLSAIEIDIPVVSHTT). Phosphoserine is present on residues serine 228 and serine 231.

The protein belongs to the claudin family. Interacts with OCLN.

It is found in the cell junction. The protein localises to the tight junction. The protein resides in the cell membrane. Its function is as follows. Plays a major role in tight junction-specific obliteration of the intercellular space, through calcium-independent cell-adhesion activity. In Bos taurus (Bovine), this protein is Claudin-12 (CLDN12).